A 304-amino-acid polypeptide reads, in one-letter code: Spore coat protein CotB (304 aa).

It localises to the spore coat. The protein localises to the spore. The protein resides in the perispore. In terms of biological role, contributes to the formation of thick-exosporium spores. The polypeptide is Spore coat protein CotB (Clostridioides difficile (strain 630) (Peptoclostridium difficile)).